The primary structure comprises 145 residues: MAKEVAGQIKLQIKGGAANPSPPVGPALGAKGINIMEFCKQFNARTQDKAGKVLPVVITYYADKSFDFIVKTPPVAIQLLEASKQKSGSAEPNRKKVAEITWEQVRTIAEDKLVDLNCFDIKAAMKMVAGTARSMGIAIKGDFPE.

It belongs to the universal ribosomal protein uL11 family. In terms of assembly, part of the ribosomal stalk of the 50S ribosomal subunit. Interacts with L10 and the large rRNA to form the base of the stalk. L10 forms an elongated spine to which L12 dimers bind in a sequential fashion forming a multimeric L10(L12)X complex. In terms of processing, one or more lysine residues are methylated.

In terms of biological role, forms part of the ribosomal stalk which helps the ribosome interact with GTP-bound translation factors. The chain is Large ribosomal subunit protein uL11 from Porphyromonas gingivalis (strain ATCC 33277 / DSM 20709 / CIP 103683 / JCM 12257 / NCTC 11834 / 2561).